The following is a 321-amino-acid chain: Glucokinase (321 aa).

8 to 13 (GDVGGT) contributes to the ATP binding site.

This sequence belongs to the bacterial glucokinase family.

It is found in the cytoplasm. It catalyses the reaction D-glucose + ATP = D-glucose 6-phosphate + ADP + H(+). This chain is Glucokinase, found in Salmonella arizonae (strain ATCC BAA-731 / CDC346-86 / RSK2980).